We begin with the raw amino-acid sequence, 1006 residues long: Cytosolic carboxypeptidase 3 (1006 aa).

The Peptidase M14 domain occupies 304–576; it reads YPYTYSNLQE…HFCDSLLDYC (273 aa). Zn(2+) contacts are provided by His368, Glu371, and His464. Residue Glu540 is the Proton donor/acceptor of the active site. Residues 790-810 are disordered; that stretch reads ESHHQLKSKAKRCSSFQSKRT.

It belongs to the peptidase M14 family. The cofactor is Zn(2+). As to expression, widely expressed. Expressed abundantly in tissues with m otile cilia such as testis, lung and trachea. Abundantly expressed in pituitary and kidney, moderately expressed in brain, eye, fat, pancreas, stomach, and adrenal.

It localises to the cytoplasm. It is found in the cytosol. The catalysed reaction is (L-glutamyl)(n+1)-gamma-L-glutamyl-L-glutamyl-[protein] + H2O = (L-glutamyl)(n)-gamma-L-glutamyl-L-glutamyl-[protein] + L-glutamate. Its function is as follows. Metallocarboxypeptidase that mediates deglutamylation of tubulin and non-tubulin target proteins. Catalyzes the removal of polyglutamate side chains present on the gamma-carboxyl group of glutamate residues within the C-terminal tail of tubulin protein. Specifically cleaves tubulin long-side-chains, while it is not able to remove the branching point glutamate. Also catalyzes the removal of polyglutamate residues from the carboxy-terminus of non-tubulin proteins such as MYLK. May catalyze the hydrolysis of aspartate from the carboxy-terminus of target proteins. Does not show detyrosinase or deglycylase activities from the carboxy-terminus of target proteins. The protein is Cytosolic carboxypeptidase 3 of Mus musculus (Mouse).